The primary structure comprises 211 residues: Large ribosomal subunit protein eL13 (211 aa).

The protein belongs to the eukaryotic ribosomal protein eL13 family. Component of the 60S large ribosomal subunit (LSU).

It localises to the cytoplasm. Component of the ribosome, a large ribonucleoprotein complex responsible for the synthesis of proteins in the cell. The small ribosomal subunit (SSU) binds messenger RNAs (mRNAs) and translates the encoded message by selecting cognate aminoacyl-transfer RNA (tRNA) molecules. The large subunit (LSU) contains the ribosomal catalytic site termed the peptidyl transferase center (PTC), which catalyzes the formation of peptide bonds, thereby polymerizing the amino acids delivered by tRNAs into a polypeptide chain. The nascent polypeptides leave the ribosome through a tunnel in the LSU and interact with protein factors that function in enzymatic processing, targeting, and the membrane insertion of nascent chains at the exit of the ribosomal tunnel. As part of the LSU, it is probably required for its formation and the maturation of rRNAs. The polypeptide is Large ribosomal subunit protein eL13 (rpl13) (Danio rerio (Zebrafish)).